The chain runs to 243 residues: Carboxy-S-adenosyl-L-methionine synthase (243 aa).

S-adenosyl-L-methionine contacts are provided by residues Tyr-40, 65–67 (GSS), 90–91 (DN), 118–119 (DI), Asn-133, and Arg-200.

Belongs to the class I-like SAM-binding methyltransferase superfamily. Cx-SAM synthase family. In terms of assembly, homodimer.

The catalysed reaction is prephenate + S-adenosyl-L-methionine = carboxy-S-adenosyl-L-methionine + 3-phenylpyruvate + H2O. Catalyzes the conversion of S-adenosyl-L-methionine (SAM) to carboxy-S-adenosyl-L-methionine (Cx-SAM). The polypeptide is Carboxy-S-adenosyl-L-methionine synthase (Shewanella frigidimarina (strain NCIMB 400)).